Reading from the N-terminus, the 329-residue chain is Sex comb on midleg-like protein 1 (329 aa).

The interval 136–160 (SYSPTLPVSRRENNSPSNLPRPSFC) is disordered. A phosphoserine mark is found at serine 138 and serine 238. Residues 258–325 (WSVEAVVLFL…YYIDRLKQGK (68 aa)) enclose the SAM domain.

This sequence belongs to the SCM family.

It localises to the nucleus. Its function is as follows. Putative Polycomb group (PcG) protein. PcG proteins act by forming multiprotein complexes, which are required to maintain the transcriptionally repressive state of homeotic genes throughout development. May be involved in spermatogenesis during sexual maturation. The sequence is that of Sex comb on midleg-like protein 1 (SCML1) from Pongo pygmaeus (Bornean orangutan).